The chain runs to 336 residues: tRNA dimethylallyltransferase (336 aa).

Position 19–26 (19–26 (GPTASGKT)) interacts with ATP. Residue 21–26 (TASGKT) coordinates substrate.

This sequence belongs to the IPP transferase family. In terms of assembly, monomer. It depends on Mg(2+) as a cofactor.

It carries out the reaction adenosine(37) in tRNA + dimethylallyl diphosphate = N(6)-dimethylallyladenosine(37) in tRNA + diphosphate. In terms of biological role, catalyzes the transfer of a dimethylallyl group onto the adenine at position 37 in tRNAs that read codons beginning with uridine, leading to the formation of N6-(dimethylallyl)adenosine (i(6)A). The protein is tRNA dimethylallyltransferase of Bifidobacterium adolescentis (strain ATCC 15703 / DSM 20083 / NCTC 11814 / E194a).